The chain runs to 166 residues: uncharacterized protein (166 aa).

117–124 (AAKSGGKT) is an ATP binding site.

This is an uncharacterized protein from Mycoplasma pneumoniae (strain ATCC 29342 / M129 / Subtype 1) (Mycoplasmoides pneumoniae).